Consider the following 79-residue polypeptide: Putative defensin-like protein 274 (79 aa).

The first 23 residues, 1–23 (MASSRFQLVALLVVFSLVISITA), serve as a signal peptide directing secretion. 4 cysteine pairs are disulfide-bonded: C35-C76, C41-C64, C47-C74, and C51-C75.

It belongs to the DEFL family.

It localises to the secreted. The chain is Putative defensin-like protein 274 from Arabidopsis thaliana (Mouse-ear cress).